The primary structure comprises 240 residues: LOB domain-containing protein 39 (240 aa).

The LOB domain maps to 1-107; that stretch reads MSCNGCRVLR…VETVLRGGTL (107 aa). Residues 200-233 form a disordered region; it reads GDRPGSPSEESVTTSCWENGMRGDNKQKRNKGEK. Positions 207 to 216 are enriched in polar residues; sequence SEESVTTSCW.

The protein belongs to the LOB domain-containing protein family. As to expression, expressed in young shoots, roots, stems, leaves and flowers.

This is LOB domain-containing protein 39 (LBD39) from Arabidopsis thaliana (Mouse-ear cress).